An 81-amino-acid chain; its full sequence is uncharacterized protein (81 aa).

A mitochondrion-targeting transit peptide spans 1–20; it reads MYSRVLSVAAIVTMALAVQA. The disordered stretch occupies residues 27–53; it reads YGNTTNSTGTTNGTNGTNTTTSSTATQ. Over residues 28-53 the composition is skewed to low complexity; sequence GNTTNSTGTTNGTNGTNTTTSSTATQ. Residues 59–79 form a helical membrane-spanning segment; that stretch reads ITNFSSGAFVIAMIAVACSVM.

It localises to the mitochondrion membrane. This is an uncharacterized protein from Schizosaccharomyces pombe (strain 972 / ATCC 24843) (Fission yeast).